A 101-amino-acid chain; its full sequence is UPF0235 protein Cphamn1_2066 (101 aa).

This sequence belongs to the UPF0235 family.

The chain is UPF0235 protein Cphamn1_2066 from Chlorobium phaeobacteroides (strain BS1).